Reading from the N-terminus, the 510-residue chain is NAD(P)H-quinone oxidoreductase subunit 2 A, chloroplastic (510 aa).

Helical transmembrane passes span 24–44 (LLLFDGSFIFPECILIFGLIL), 57–77 (IPWLYFISSTSLVMSITALLF), 99–119 (IFQFLILLCSTLCIPLSVEYI), 124–144 (MAITEFLLFVLTATLGGMFLC), 149–169 (LITIFVAPECFSLCSYLLSGY), 183–203 (YLLMGGASSSILVHGFSWLYG), 227–247 (PGISIALIFITVGIGFKLSPA), 295–315 (WHLLLEILAILSMILGNLIAI), 323–343 (MLAYSSIGQIGYVIIGIIVGD), 354–374 (YMLFYISMNLGTFACIVSFGL), 395–415 (ALSLALCLLSLGGLPPLAGFF), 418–438 (LHLFWCGWQAGLYFLVSIGLL), and 484–504 (MIVCVIASTIPGISMNPIIAI).

This sequence belongs to the complex I subunit 2 family. In terms of assembly, NDH is composed of at least 16 different subunits, 5 of which are encoded in the nucleus.

The protein resides in the plastid. It is found in the chloroplast thylakoid membrane. It carries out the reaction a plastoquinone + NADH + (n+1) H(+)(in) = a plastoquinol + NAD(+) + n H(+)(out). The catalysed reaction is a plastoquinone + NADPH + (n+1) H(+)(in) = a plastoquinol + NADP(+) + n H(+)(out). Its function is as follows. NDH shuttles electrons from NAD(P)H:plastoquinone, via FMN and iron-sulfur (Fe-S) centers, to quinones in the photosynthetic chain and possibly in a chloroplast respiratory chain. The immediate electron acceptor for the enzyme in this species is believed to be plastoquinone. Couples the redox reaction to proton translocation, and thus conserves the redox energy in a proton gradient. The protein is NAD(P)H-quinone oxidoreductase subunit 2 A, chloroplastic of Vitis vinifera (Grape).